The chain runs to 131 residues: Small ribosomal subunit protein uS8 (131 aa).

The protein belongs to the universal ribosomal protein uS8 family. Part of the 30S ribosomal subunit. Contacts proteins S5 and S12.

Functionally, one of the primary rRNA binding proteins, it binds directly to 16S rRNA central domain where it helps coordinate assembly of the platform of the 30S subunit. This Delftia acidovorans (strain DSM 14801 / SPH-1) protein is Small ribosomal subunit protein uS8.